A 119-amino-acid polypeptide reads, in one-letter code: Ribonuclease pancreatic (119 aa).

Gln1 carries the pyrrolidone carboxylic acid modification. His10 serves as the catalytic Proton acceptor. Disulfide bonds link Cys25–Cys80, Cys39–Cys91, and Cys57–Cys106. Lys40–Thr44 serves as a coordination point for substrate. Catalysis depends on His113, which acts as the Proton donor.

Belongs to the pancreatic ribonuclease family. As to quaternary structure, monomer. Interacts with and forms tight 1:1 complexes with RNH1. Dimerization of two such complexes may occur. Interaction with RNH1 inhibits this protein. In terms of tissue distribution, pancreas.

The protein localises to the secreted. The catalysed reaction is an [RNA] containing cytidine + H2O = an [RNA]-3'-cytidine-3'-phosphate + a 5'-hydroxy-ribonucleotide-3'-[RNA].. It catalyses the reaction an [RNA] containing uridine + H2O = an [RNA]-3'-uridine-3'-phosphate + a 5'-hydroxy-ribonucleotide-3'-[RNA].. Endonuclease that catalyzes the cleavage of RNA on the 3' side of pyrimidine nucleotides. Acts on single-stranded and double-stranded RNA. The sequence is that of Ribonuclease pancreatic from Iguana iguana (Common iguana).